The primary structure comprises 164 residues: Aspartate carbamoyltransferase regulatory chain (164 aa).

Residues Cys-116, Cys-121, Cys-146, and Cys-149 each coordinate Zn(2+).

Belongs to the PyrI family. Contains catalytic and regulatory chains. It depends on Zn(2+) as a cofactor.

In terms of biological role, involved in allosteric regulation of aspartate carbamoyltransferase. The chain is Aspartate carbamoyltransferase regulatory chain from Staphylothermus marinus (strain ATCC 43588 / DSM 3639 / JCM 9404 / F1).